Here is a 115-residue protein sequence, read N- to C-terminus: MARVKRGNVARNRRNKILRLARGFQGSNGTLFRTANQRVMKALCNAYRDRRRRKRDFRRLWIARINAAARMNGVSYSRLIGGLKKADVRINRKMLAQLAVLDPSGFETVVAAAKS.

This sequence belongs to the bacterial ribosomal protein bL20 family.

Functionally, binds directly to 23S ribosomal RNA and is necessary for the in vitro assembly process of the 50S ribosomal subunit. It is not involved in the protein synthesizing functions of that subunit. The chain is Large ribosomal subunit protein bL20 from Synechococcus sp. (strain RCC307).